Reading from the N-terminus, the 204-residue chain is Large ribosomal subunit protein eL15B (204 aa).

Residues 165–185 form a disordered region; it reads TATGKKSRGINKGHKFNNTKA. Positions 169–185 are enriched in basic residues; that stretch reads KKSRGINKGHKFNNTKA.

Belongs to the eukaryotic ribosomal protein eL15 family. Component of the large ribosomal subunit (LSU). Mature yeast ribosomes consist of a small (40S) and a large (60S) subunit. The 40S small subunit contains 1 molecule of ribosomal RNA (18S rRNA) and 33 different proteins (encoded by 57 genes). The large 60S subunit contains 3 rRNA molecules (25S, 5.8S and 5S rRNA) and 46 different proteins (encoded by 81 genes).

The protein resides in the cytoplasm. Component of the ribosome, a large ribonucleoprotein complex responsible for the synthesis of proteins in the cell. The small ribosomal subunit (SSU) binds messenger RNAs (mRNAs) and translates the encoded message by selecting cognate aminoacyl-transfer RNA (tRNA) molecules. The large subunit (LSU) contains the ribosomal catalytic site termed the peptidyl transferase center (PTC), which catalyzes the formation of peptide bonds, thereby polymerizing the amino acids delivered by tRNAs into a polypeptide chain. The nascent polypeptides leave the ribosome through a tunnel in the LSU and interact with protein factors that function in enzymatic processing, targeting, and the membrane insertion of nascent chains at the exit of the ribosomal tunnel. The polypeptide is Large ribosomal subunit protein eL15B (Saccharomyces cerevisiae (strain ATCC 204508 / S288c) (Baker's yeast)).